The chain runs to 238 residues: MTTSPVKVLIHGASGRMGKALLRLAAEDDALHVVGAVVGRSPSQRVVDGVPYFAANELGGAPAFDVAIDFSLPQGFAPILALCVQRGKPLVSGTTGLDEAQRAGLLQAAGQIPLVWASNFSLGVAVLTELVERAAGSLPGWDCDIIEAHHVHKQDAPSGTALTLGEAATGSGAQPRFASVRAGDIVGEHSVQFTGLGERVELIHRATNRDIFARGALHAAKRLLGKPPGSYRVRDLVL.

12-17 (GASGRM) contacts NAD(+). R40 provides a ligand contact to NADP(+). NAD(+)-binding positions include 93–95 (GTT) and 117–120 (ASNF). H149 acts as the Proton donor/acceptor in catalysis. Residue H150 coordinates (S)-2,3,4,5-tetrahydrodipicolinate. The Proton donor role is filled by K153. 159-160 (GT) lines the (S)-2,3,4,5-tetrahydrodipicolinate pocket.

Belongs to the DapB family.

The protein resides in the cytoplasm. The enzyme catalyses (S)-2,3,4,5-tetrahydrodipicolinate + NAD(+) + H2O = (2S,4S)-4-hydroxy-2,3,4,5-tetrahydrodipicolinate + NADH + H(+). The catalysed reaction is (S)-2,3,4,5-tetrahydrodipicolinate + NADP(+) + H2O = (2S,4S)-4-hydroxy-2,3,4,5-tetrahydrodipicolinate + NADPH + H(+). Its pathway is amino-acid biosynthesis; L-lysine biosynthesis via DAP pathway; (S)-tetrahydrodipicolinate from L-aspartate: step 4/4. Functionally, catalyzes the conversion of 4-hydroxy-tetrahydrodipicolinate (HTPA) to tetrahydrodipicolinate. In Xanthomonas campestris pv. campestris (strain 8004), this protein is 4-hydroxy-tetrahydrodipicolinate reductase.